The chain runs to 163 residues: NADH-quinone oxidoreductase subunit I (163 aa).

2 4Fe-4S ferredoxin-type domains span residues 53–83 (LRRY…IEAG) and 94–123 (VRYD…EGPN). 8 residues coordinate [4Fe-4S] cluster: cysteine 63, cysteine 66, cysteine 69, cysteine 73, cysteine 103, cysteine 106, cysteine 109, and cysteine 113.

This sequence belongs to the complex I 23 kDa subunit family. As to quaternary structure, NDH-1 is composed of 14 different subunits. Subunits NuoA, H, J, K, L, M, N constitute the membrane sector of the complex. The cofactor is [4Fe-4S] cluster.

The protein localises to the cell inner membrane. It carries out the reaction a quinone + NADH + 5 H(+)(in) = a quinol + NAD(+) + 4 H(+)(out). NDH-1 shuttles electrons from NADH, via FMN and iron-sulfur (Fe-S) centers, to quinones in the respiratory chain. The immediate electron acceptor for the enzyme in this species is believed to be ubiquinone. Couples the redox reaction to proton translocation (for every two electrons transferred, four hydrogen ions are translocated across the cytoplasmic membrane), and thus conserves the redox energy in a proton gradient. The chain is NADH-quinone oxidoreductase subunit I from Allorhizobium ampelinum (strain ATCC BAA-846 / DSM 112012 / S4) (Agrobacterium vitis (strain S4)).